A 185-amino-acid polypeptide reads, in one-letter code: Transcription termination/antitermination protein NusG (185 aa).

Residues 134–162 enclose the KOW domain; sequence PGQMVRVIDGPFNDFDGLVEEVNYEKNRL.

This sequence belongs to the NusG family.

Participates in transcription elongation, termination and antitermination. In Xylella fastidiosa (strain Temecula1 / ATCC 700964), this protein is Transcription termination/antitermination protein NusG.